The sequence spans 429 residues: Saccharopine dehydrogenase-like oxidoreductase (429 aa).

Alanine 2 bears the N-acetylalanine mark. 3 positions are modified to phosphoserine: serine 209, serine 215, and serine 217.

The protein belongs to the saccharopine dehydrogenase family.

This Rattus norvegicus (Rat) protein is Saccharopine dehydrogenase-like oxidoreductase (Sccpdh).